The following is a 440-amino-acid chain: Tol-Pal system protein TolB (440 aa).

Positions 1 to 28 (MVMTRRIFFSWFIVICSLWLSSFSSVHA) are cleaved as a signal peptide. The interval 417–440 (RNERQLPTPNDASDPAWSPLLNMQ) is disordered.

This sequence belongs to the TolB family. In terms of assembly, the Tol-Pal system is composed of five core proteins: the inner membrane proteins TolA, TolQ and TolR, the periplasmic protein TolB and the outer membrane protein Pal. They form a network linking the inner and outer membranes and the peptidoglycan layer.

The protein resides in the periplasm. Functionally, part of the Tol-Pal system, which plays a role in outer membrane invagination during cell division and is important for maintaining outer membrane integrity. The chain is Tol-Pal system protein TolB from Bartonella quintana (strain Toulouse) (Rochalimaea quintana).